The sequence spans 263 residues: Probable ABC transporter permease protein ycf63 (263 aa).

Transmembrane regions (helical) follow at residues 43–63 (IVGPGSLNITLLTACFISMVF), 70–89 (EFLYLDAASAIGAVIVIAFT), 150–170 (ILSIISLTASIAISLFVAFVM), 188–208 (ISDFLICLEKSMFFAIIIGFI), and 230–250 (SVVTILFTVFITDFVLSYFMF).

The protein belongs to the MlaE permease family.

It is found in the plastid. Its subcellular location is the chloroplast membrane. Functionally, could be part of an ABC transporter complex. The sequence is that of Probable ABC transporter permease protein ycf63 (ycf63) from Pyropia yezoensis (Susabi-nori).